Consider the following 7763-residue polypeptide: Nonribosomal peptide synthetase agiA (7763 aa).

The interval 20 to 168 (APSVMQEEMI…DGWSARALLE (149 aa)) is condensation 1. The segment at 469-866 (EQAASKWPSK…GRADGQIKLR (398 aa)) is adenylation 1. The 77-residue stretch at 995–1071 (LPESPAERLL…DVARAMSPSS (77 aa)) folds into the Carrier 1 domain. S1032 is subject to O-(pantetheine 4'-phosphoryl)serine. The tract at residues 1104–1526 (IYPCTPQQEG…GLSDQKLITG (423 aa)) is condensation 2. The tract at residues 1562–1968 (FEMQADMTPQ…GRIDSQIKLR (407 aa)) is adenylation 2. The region spanning 2090–2166 (WEQGSIEDKI…SQAKCATSHT (77 aa)) is the Carrier 2 domain. The residue at position 2127 (S2127) is an O-(pantetheine 4'-phosphoryl)serine. The tract at residues 2212 to 2556 (DHFNQSVLLD…IMPLVFNYQG (345 aa)) is epimerase (E). A condensation 3 region spans residues 2676-3016 (DIIPCTPMQR…PALVNTLLNF (341 aa)). The segment at 3136–3531 (WAAQVPEKVA…GRMDDQIKIR (396 aa)) is adenylation 3. Residues 3667-3743 (GPESPTEIML…ELATILNTSY (77 aa)) enclose the Carrier 3 domain. At S3704 the chain carries O-(pantetheine 4'-phosphoryl)serine. The segment at 3789 to 4238 (VMPCTPFQEG…ISQSIDALVQ (450 aa)) is condensation 4. The adenylation 4 stretch occupies residues 4321–4687 (VGSQQPIIPI…GRFDRQIKIR (367 aa)). Residues 4806–4880 (APTTEREKVI…DLARQLESTA (75 aa)) enclose the Carrier 4 domain. O-(pantetheine 4'-phosphoryl)serine is present on S4840. Positions 4902 to 5339 (SFAQGRLWFL…ALLNDLSMHD (438 aa)) are condensation 5. The adenylation 5 stretch occupies residues 5361–5765 (FRQEARSHPD…GRRDDQVKIR (405 aa)). An S-adenosyl-L-methionine-dependent N-methyltransferase region spans residues 5820–5975 (DAWKNVFDTE…YLSEIVQKLV (156 aa)). Residues 6306–6381 (EYGSEMERIL…RLADRLLSKQ (76 aa)) enclose the Carrier 5 domain. S6341 carries the post-translational modification O-(pantetheine 4'-phosphoryl)serine. The tract at residues 6378–6399 (LSKQSDSNTEANTSTDGKTQHS) is disordered. Residues 6379–6399 (SKQSDSNTEANTSTDGKTQHS) show a composition bias toward polar residues. The interval 6424 to 6883 (MPCTPFQEGV…TVGDAEEAAL (460 aa)) is condensation 6. The adenylation 6 stretch occupies residues 6913-7327 (RQAMESPCKI…GRMDSQVKLR (415 aa)). The Carrier 6 domain occupies 7446 to 7522 (PSPGTLEATL…SQAFRILCDV (77 aa)). Residue S7483 is modified to O-(pantetheine 4'-phosphoryl)serine. Residues 7542–7638 (TMVLIHPFFG…TGKGSPFSTV (97 aa)) are thioesterase (TE).

The protein belongs to the NRP synthetase family.

Its function is as follows. Nonribosomal peptide synthetase; part of the gene cluster that mediates the biosynthesis of the aspergillicins A and F, 2 cryptic cyclic hexa-depsipeptides. The hexamodular NRPS agiA catalyzes the condensation of the six amino acid residues including N-Me-L-O-Me-tyrosine, L-proline 1, L-proline 2, D-isoleucine, O-acetyl-threonine, and L-isoleucine. The starting condensation domain (C1) of agiA probably loads acetyl-CoA which is condensed on the N-terminus of threonine by the first module to yield O-acetyl-threonine. The second module then loads L-isoleucine. The epimerase (E) domain on module 2 is probably involved in the formation of the D-isoleucine moiety. Modules 3 and 4 further load 2 successive L-prolines. Module 5 is then involved in the condensation of O-Me-L-tyrosine produced by the O-methyltransferase agiB and the N-methyl transferase (NMeT) domain on module 5 probably catalyzes the N-methylation to yield the N-Me-L-O-Me-tyrosine moiety. The A domain of module 5 loads preferentially O-Me-L-tyrosine, but it can also accept L-phenylalanine, which leads to the production of aspergillicin G. Module 6 then loads the last residue, L-isoleucine. The C-terminal thiolesterase (TE) domain probably cyclizes the peptide using the hydroxy group from threonine to form the cyclic depsipeptide. The chain is Nonribosomal peptide synthetase agiA from Aspergillus flavus (strain ATCC 200026 / FGSC A1120 / IAM 13836 / NRRL 3357 / JCM 12722 / SRRC 167).